Here is a 282-residue protein sequence, read N- to C-terminus: Aldo-keto reductase BQ2027_MB2996 (282 aa).

The active-site Proton donor is the tyrosine 57. NADPH contacts are provided by leucine 197, valine 235, arginine 237, serine 238, alanine 239, arginine 243, serine 246, asparagine 247, and arginine 273.

Belongs to the aldo/keto reductase family.

This Mycobacterium bovis (strain ATCC BAA-935 / AF2122/97) protein is Aldo-keto reductase BQ2027_MB2996.